The chain runs to 441 residues: 2-oxoisovalerate dehydrogenase subunit alpha, mitochondrial (441 aa).

The transit peptide at 1 to 17 (MISQSYRILSRISRNNE) directs the protein to the mitochondrion. Position 145 to 147 (145 to 147 (QYR)) interacts with thiamine diphosphate. 3 residues coordinate K(+): Ser-194, Thr-199, and Gln-200.

This sequence belongs to the BCKDHA family. Heterotetramer of alpha and beta chains. Requires thiamine diphosphate as cofactor.

The protein resides in the mitochondrion matrix. The catalysed reaction is N(6)-[(R)-lipoyl]-L-lysyl-[protein] + 3-methyl-2-oxobutanoate + H(+) = N(6)-[(R)-S(8)-2-methylpropanoyldihydrolipoyl]-L-lysyl-[protein] + CO2. Functionally, the branched-chain alpha-keto dehydrogenase complex catalyzes the overall conversion of alpha-keto acids to acyl-CoA and CO(2). It contains multiple copies of three enzymatic components: branched-chain alpha-keto acid decarboxylase (E1), lipoamide acyltransferase (E2) and lipoamide dehydrogenase (E3). This Dictyostelium discoideum (Social amoeba) protein is 2-oxoisovalerate dehydrogenase subunit alpha, mitochondrial (bkdA).